The chain runs to 422 residues: Probable D-serine dehydratase (422 aa).

Residue Lys-105 is modified to N6-(pyridoxal phosphate)lysine.

This sequence belongs to the serine/threonine dehydratase family. DsdA subfamily. Requires pyridoxal 5'-phosphate as cofactor.

The catalysed reaction is D-serine = pyruvate + NH4(+). The protein is Probable D-serine dehydratase of Carboxydothermus hydrogenoformans (strain ATCC BAA-161 / DSM 6008 / Z-2901).